The chain runs to 417 residues: NADH-quinone oxidoreductase subunit D (417 aa).

Belongs to the complex I 49 kDa subunit family. NDH-1 is composed of 14 different subunits. Subunits NuoB, C, D, E, F, and G constitute the peripheral sector of the complex.

Its subcellular location is the cell inner membrane. It carries out the reaction a quinone + NADH + 5 H(+)(in) = a quinol + NAD(+) + 4 H(+)(out). Its function is as follows. NDH-1 shuttles electrons from NADH, via FMN and iron-sulfur (Fe-S) centers, to quinones in the respiratory chain. The immediate electron acceptor for the enzyme in this species is believed to be ubiquinone. Couples the redox reaction to proton translocation (for every two electrons transferred, four hydrogen ions are translocated across the cytoplasmic membrane), and thus conserves the redox energy in a proton gradient. The sequence is that of NADH-quinone oxidoreductase subunit D from Paraburkholderia xenovorans (strain LB400).